A 51-amino-acid polypeptide reads, in one-letter code: Defensin-like protein 1 (51 aa).

Residue Gln1 is modified to Pyrrolidone carboxylic acid. Disulfide bonds link Cys4–Cys51, Cys15–Cys36, Cys21–Cys45, and Cys25–Cys47.

As to quaternary structure, forms oligomers in its native state.

In terms of biological role, possesses antifungal activity sensitive to inorganic cations. The chain is Defensin-like protein 1 from Sinapis alba (White mustard).